A 55-amino-acid chain; its full sequence is Large ribosomal subunit protein bL33 (55 aa).

This sequence belongs to the bacterial ribosomal protein bL33 family.

The sequence is that of Large ribosomal subunit protein bL33 from Campylobacter fetus subsp. fetus (strain 82-40).